The following is a 371-amino-acid chain: Anhydro-N-acetylmuramic acid kinase (371 aa).

G12–D19 contacts ATP.

This sequence belongs to the anhydro-N-acetylmuramic acid kinase family.

The catalysed reaction is 1,6-anhydro-N-acetyl-beta-muramate + ATP + H2O = N-acetyl-D-muramate 6-phosphate + ADP + H(+). The protein operates within amino-sugar metabolism; 1,6-anhydro-N-acetylmuramate degradation. It functions in the pathway cell wall biogenesis; peptidoglycan recycling. In terms of biological role, catalyzes the specific phosphorylation of 1,6-anhydro-N-acetylmuramic acid (anhMurNAc) with the simultaneous cleavage of the 1,6-anhydro ring, generating MurNAc-6-P. Is required for the utilization of anhMurNAc either imported from the medium or derived from its own cell wall murein, and thus plays a role in cell wall recycling. The polypeptide is Anhydro-N-acetylmuramic acid kinase (Saccharophagus degradans (strain 2-40 / ATCC 43961 / DSM 17024)).